The sequence spans 76 residues: DNA gyrase inhibitor YacG (76 aa).

Positions 7, 10, 26, and 30 each coordinate Zn(2+).

Belongs to the DNA gyrase inhibitor YacG family. In terms of assembly, interacts with GyrB. Zn(2+) serves as cofactor.

Its function is as follows. Inhibits all the catalytic activities of DNA gyrase by preventing its interaction with DNA. Acts by binding directly to the C-terminal domain of GyrB, which probably disrupts DNA binding by the gyrase. This is DNA gyrase inhibitor YacG from Pseudoalteromonas translucida (strain TAC 125).